We begin with the raw amino-acid sequence, 468 residues long: UDP-N-acetylmuramate--L-alanine ligase (468 aa).

112–118 (GMHGKTT) provides a ligand contact to ATP.

The protein belongs to the MurCDEF family.

It localises to the cytoplasm. It carries out the reaction UDP-N-acetyl-alpha-D-muramate + L-alanine + ATP = UDP-N-acetyl-alpha-D-muramoyl-L-alanine + ADP + phosphate + H(+). The protein operates within cell wall biogenesis; peptidoglycan biosynthesis. Cell wall formation. The sequence is that of UDP-N-acetylmuramate--L-alanine ligase from Koribacter versatilis (strain Ellin345).